Consider the following 197-residue polypeptide: Ubiquitin-conjugating enzyme E2 T (197 aa).

In terms of domain architecture, UBC core spans 2–152 (QRASRLKREL…ARQWTEKHAR (151 aa)). The active-site Glycyl thioester intermediate is the Cys-86. Glycyl lysine isopeptide (Lys-Gly) (interchain with G-Cter in ubiquitin) cross-links involve residues Lys-91 and Lys-182. The segment at 149 to 197 (KHARQKQKADEEEMLDNLPEAGDSRVHNSTQKRKASQLVGIEKKFHPDV) is disordered. The residue at position 184 (Ser-184) is a Phosphoserine. Residues Lys-191 and Lys-192 each participate in a glycyl lysine isopeptide (Lys-Gly) (interchain with G-Cter in SUMO2) cross-link.

It belongs to the ubiquitin-conjugating enzyme family. As to quaternary structure, directly interacts with FANCL. Interacts with BRCA1. Post-translationally, auto-ubiquitinated. Effects of auto-monoubiquitination at Lys-91 and Lys-182 are unclear: according to a report, monoubiquitination inactivates E2 enzyme activity. In contrast, according to another report, autoubiquitination does not affect E2 enzyme activity.

It is found in the nucleus. It catalyses the reaction S-ubiquitinyl-[E1 ubiquitin-activating enzyme]-L-cysteine + [E2 ubiquitin-conjugating enzyme]-L-cysteine = [E1 ubiquitin-activating enzyme]-L-cysteine + S-ubiquitinyl-[E2 ubiquitin-conjugating enzyme]-L-cysteine.. The protein operates within protein modification; protein ubiquitination. Accepts ubiquitin from the E1 complex and catalyzes its covalent attachment to other proteins. Catalyzes monoubiquitination. Involved in mitomycin-C (MMC)-induced DNA repair. Acts as a specific E2 ubiquitin-conjugating enzyme for the Fanconi anemia complex by associating with E3 ubiquitin-protein ligase FANCL and catalyzing monoubiquitination of FANCD2, a key step in the DNA damage pathway. Also mediates monoubiquitination of FANCL and FANCI. May contribute to ubiquitination and degradation of BRCA1. In vitro able to promote polyubiquitination using all 7 ubiquitin Lys residues, but may prefer 'Lys-11'-, 'Lys-27'-, 'Lys-48'- and 'Lys-63'-linked polyubiquitination. In Homo sapiens (Human), this protein is Ubiquitin-conjugating enzyme E2 T (UBE2T).